Consider the following 204-residue polypeptide: NADH-quinone oxidoreductase subunit C (204 aa).

It belongs to the complex I 30 kDa subunit family. In terms of assembly, NDH-1 is composed of 14 different subunits. Subunits NuoB, C, D, E, F, and G constitute the peripheral sector of the complex.

It is found in the cell inner membrane. The enzyme catalyses a quinone + NADH + 5 H(+)(in) = a quinol + NAD(+) + 4 H(+)(out). Its function is as follows. NDH-1 shuttles electrons from NADH, via FMN and iron-sulfur (Fe-S) centers, to quinones in the respiratory chain. The immediate electron acceptor for the enzyme in this species is believed to be ubiquinone. Couples the redox reaction to proton translocation (for every two electrons transferred, four hydrogen ions are translocated across the cytoplasmic membrane), and thus conserves the redox energy in a proton gradient. The protein is NADH-quinone oxidoreductase subunit C of Rhodopseudomonas palustris (strain ATCC BAA-98 / CGA009).